The primary structure comprises 155 residues: Transcriptional repressor NrdR (155 aa).

A compositionally biased stretch (polar residues) spans 1–11 (MECPNCHQNAS). Residues 1–22 (MECPNCHQNASRVIDSRPSDEN) form a disordered region. The segment at 3–34 (CPNCHQNASRVIDSRPSDENRAIRRRRECENC) is a zinc-finger region. In terms of domain architecture, ATP-cone spans 49-139 (LLVVKNDGTR…IYREFKDMSS (91 aa)).

This sequence belongs to the NrdR family. Zn(2+) is required as a cofactor.

Functionally, negatively regulates transcription of bacterial ribonucleotide reductase nrd genes and operons by binding to NrdR-boxes. The polypeptide is Transcriptional repressor NrdR (Lactobacillus acidophilus (strain ATCC 700396 / NCK56 / N2 / NCFM)).